The chain runs to 677 residues: Protein asunder (677 aa).

Residues 515 to 540 (RLKLSKAKDQYRLLYRELEQLIQLNS) adopt a coiled-coil conformation. Residues 578-598 (ESPLSPERLEPTSSSSSNSLL) show a composition bias toward low complexity. The tract at residues 578–604 (ESPLSPERLEPTSSSSSNSLLKARKRR) is disordered. The short motif at 598 to 604 (LKARKRR) is the Nuclear localization signal (NLS) element.

This sequence belongs to the Integrator subunit 13 family. As to quaternary structure, belongs to the multiprotein complex Integrator, at least composed of IntS1, IntS2, IntS3, IntS4, omd/IntS5, IntS6, defl/IntS7, IntS8, IntS9, IntS10, IntS11, IntS12, asun/IntS13, IntS14 and IntS15. The core complex associates with protein phosphatase 2A subunits mts/PP2A and Pp2A-29B, to form the Integrator-PP2A (INTAC) complex. Post-translationally, phosphorylated.

It is found in the nucleus. The protein resides in the cytoplasm. It localises to the perinuclear region. Functionally, component of the integrator complex, a multiprotein complex that terminates RNA polymerase II (Pol II) transcription in the promoter-proximal region of genes. The integrator complex provides a quality checkpoint during transcription elongation by driving premature transcription termination of transcripts that are unfavorably configured for transcriptional elongation: the complex terminates transcription by (1) catalyzing dephosphorylation of the C-terminal domain (CTD) of Pol II subunit Polr2A/Rbp1 and Spt5, and (2) degrading the exiting nascent RNA transcript via endonuclease activity. The integrator complex is also involved in the 3'-end processing of the U7 snRNA, and also the spliceosomal snRNAs U1, U2, U4 and U5. The chain is Protein asunder (asun) from Drosophila willistoni (Fruit fly).